A 60-amino-acid polypeptide reads, in one-letter code: Homeobox protein engrailed-like A (60 aa).

A DNA-binding region (homeobox) is located at residues 1–41 (ADQLARLRAEFQANRYLTEERRQNLARELSLNEAQIKIWFQ).

It belongs to the engrailed homeobox family.

The protein resides in the nucleus. This Myxine glutinosa (Atlantic hagfish) protein is Homeobox protein engrailed-like A.